The following is a 513-amino-acid chain: ATP synthase subunit alpha (513 aa).

Residue 169 to 176 (GDRQTGKT) participates in ATP binding.

This sequence belongs to the ATPase alpha/beta chains family. In terms of assembly, F-type ATPases have 2 components, CF(1) - the catalytic core - and CF(0) - the membrane proton channel. CF(1) has five subunits: alpha(3), beta(3), gamma(1), delta(1), epsilon(1). CF(0) has three main subunits: a(1), b(2) and c(9-12). The alpha and beta chains form an alternating ring which encloses part of the gamma chain. CF(1) is attached to CF(0) by a central stalk formed by the gamma and epsilon chains, while a peripheral stalk is formed by the delta and b chains.

The protein localises to the cell inner membrane. It carries out the reaction ATP + H2O + 4 H(+)(in) = ADP + phosphate + 5 H(+)(out). Produces ATP from ADP in the presence of a proton gradient across the membrane. The alpha chain is a regulatory subunit. The chain is ATP synthase subunit alpha from Methylobacillus flagellatus (strain ATCC 51484 / DSM 6875 / VKM B-1610 / KT).